The following is a 737-amino-acid chain: Glycogen [starch] synthase, muscle (737 aa).

The residue at position 8 (Ser8) is a Phosphoserine; by AMPK and PKA. At Ser11 the chain carries Phosphoserine. Residue Lys39 coordinates UDP. Positions 205 and 211 each coordinate UDP-alpha-D-glucose. Residues His291, Glu292, Gln294, His297, and Lys301 each coordinate alpha-D-glucose 6-phosphate. Arg331 contributes to the UDP binding site. Arg331 contributes to the UDP-alpha-D-glucose binding site. Ser412 is modified (phosphoserine). Position 501 (His501) interacts with alpha-D-glucose 6-phosphate. The UDP-alpha-D-glucose site is built by Glu510, Trp512, and Gly513. A UDP-binding site is contributed by Thr515. Residues Arg582 and Arg586 each contribute to the alpha-D-glucose 6-phosphate site. The disordered stretch occupies residues 634–737 (YRYPRPASVP…PTSSLGEERN (104 aa)). Phosphoserine; by DYRK2, GSK3-alpha, GSK3-beta and PASK is present on Ser641. Residues Ser645 and Ser649 each carry the phosphoserine; by GSK3-alpha and GSK3-beta modification. A Phosphoserine modification is found at Ser652. Ser653 is subject to Phosphoserine; by GSK3-alpha and GSK3-beta. The residue at position 657 (Ser657) is a Phosphoserine; by CK2. Residues 658 to 681 (EDEEDPRNGPLEEDSERYDEDEEA) are compositionally biased toward acidic residues. Ser672 carries the phosphoserine modification. Residues 682–695 (AKDRRNIRAPEWPR) show a composition bias toward basic and acidic residues. Ser698 carries the phosphoserine modification. A compositionally biased stretch (polar residues) spans 698 to 714 (SCTSSTSGSKRNSVDTA). Residue Thr700 is modified to Phosphothreonine. Ser710 is subject to Phosphoserine. The segment covering 715 to 737 (TSSSLSTPSEPLSPTSSLGEERN) has biased composition (low complexity). Thr721 is subject to Phosphothreonine. Phosphoserine occurs at positions 727 and 731.

Belongs to the glycosyltransferase 3 family. Part of the GYS1-GYG1 complex, a heterooctamer composed of a tetramer of GYS1 and 2 dimers of GYG1, where each GYS1 protomer binds to one GYG1 subunit (via GYG1 C-terminus); the GYS1 tetramer may dissociate from GYG1 dimers to continue glycogen polymerization on its own. Post-translationally, phosphorylation at Ser-8 by AMPK inactivates the enzyme activity. Primed phosphorylation at Ser-657 (site 5) by CSNK2A1 and CSNK2A2 is required for inhibitory phosphorylation at Ser-641 (site 3a), Ser-645 (site 3b), Ser-649 (site 3c) and Ser-653 (site 4) by GSK3A an GSK3B. Phosphorylated at Ser-641 by PASK, leading to inactivation; phosphorylation by PASK is inhibited by glycogen. Phosphorylated at Ser-641 by DYRK2, leading to inactivation. Dephosphorylation at Ser-641 and Ser-645 by PP1 activates the enzyme.

It catalyses the reaction [(1-&gt;4)-alpha-D-glucosyl](n) + UDP-alpha-D-glucose = [(1-&gt;4)-alpha-D-glucosyl](n+1) + UDP + H(+). It participates in glycan biosynthesis; glycogen biosynthesis. Allosteric activation by glucose-6-phosphate. Phosphorylation reduces the activity towards UDP-glucose. When in the non-phosphorylated state, glycogen synthase does not require glucose-6-phosphate as an allosteric activator; when phosphorylated it does. Its function is as follows. Glycogen synthase participates in the glycogen biosynthetic process along with glycogenin and glycogen branching enzyme. Extends the primer composed of a few glucose units formed by glycogenin by adding new glucose units to it. In this context, glycogen synthase transfers the glycosyl residue from UDP-Glc to the non-reducing end of alpha-1,4-glucan. The chain is Glycogen [starch] synthase, muscle (GYS1) from Macaca mulatta (Rhesus macaque).